We begin with the raw amino-acid sequence, 387 residues long: MRVAMLTREYPPEVYGGAGVHVTELVAYLRRLCAVDVHCMGAPRPGAFAYRPDPRLGSANAALSTLSADLVMANAASAATVVHSHTWYTALAGHLAAILYDIPHVLTAHSLEPLRPWKKEQLGGGYQVSTWVEQTAVLAANAVIAVSSAMRNDMLRVYPSLDPNLVHVIRNGIDTETWYPAGPARTGSVLAELGVDPNRPMAVFVGRITRQKGVVHLVTAAHRFRSDVQLVLCAGAADTPEVADEVRVAVAELARNRTGVFWIQDRLTIGQLREILSAATVFVCPSVYEPLGIVNLEAMACATAVVASDVGGIPEVVADGITGSLVHYDADDATGYQARLAEAVNALVADPATAERYGHAGRQRCIQEFSWAYIAEQTLDIYRKVCA.

Belongs to the glycosyltransferase group 1 family.

The enzyme catalyses ADP-alpha-D-glucose + alpha-D-glucose 1-phosphate = alpha-maltose 1-phosphate + ADP + H(+). Its pathway is capsule biogenesis; capsule polysaccharide biosynthesis. It functions in the pathway glycan biosynthesis; glycogen biosynthesis. Functionally, involved in the biosynthesis of the maltose-1-phosphate (M1P) building block required for alpha-glucan production by the key enzyme GlgE. Catalyzes the formation of an alpha-1,4 linkage between glucose from ADP-glucose and glucose 1-phosphate (G1P) to yield maltose-1-phosphate (M1P). This is Alpha-maltose-1-phosphate synthase from Mycobacterium tuberculosis (strain CDC 1551 / Oshkosh).